Here is a 440-residue protein sequence, read N- to C-terminus: Glutamyl-tRNA reductase (440 aa).

Substrate contacts are provided by residues 50 to 53 (TCNR), Ser-109, 114 to 116 (EPQ), and Gln-120. Cys-51 serves as the catalytic Nucleophile. Position 189 to 194 (189 to 194 (GAGEMA)) interacts with NADP(+).

The protein belongs to the glutamyl-tRNA reductase family. Homodimer.

It carries out the reaction (S)-4-amino-5-oxopentanoate + tRNA(Glu) + NADP(+) = L-glutamyl-tRNA(Glu) + NADPH + H(+). Its pathway is porphyrin-containing compound metabolism; protoporphyrin-IX biosynthesis; 5-aminolevulinate from L-glutamyl-tRNA(Glu): step 1/2. Catalyzes the NADPH-dependent reduction of glutamyl-tRNA(Glu) to glutamate 1-semialdehyde (GSA). This is Glutamyl-tRNA reductase from Nitratidesulfovibrio vulgaris (strain ATCC 29579 / DSM 644 / CCUG 34227 / NCIMB 8303 / VKM B-1760 / Hildenborough) (Desulfovibrio vulgaris).